Consider the following 451-residue polypeptide: Phosphoglucosamine mutase (451 aa).

Residue serine 103 is the Phosphoserine intermediate of the active site. Mg(2+) contacts are provided by serine 103, aspartate 243, aspartate 245, and aspartate 247. Phosphoserine is present on serine 103.

It belongs to the phosphohexose mutase family. Mg(2+) serves as cofactor. In terms of processing, activated by phosphorylation.

It catalyses the reaction alpha-D-glucosamine 1-phosphate = D-glucosamine 6-phosphate. Catalyzes the conversion of glucosamine-6-phosphate to glucosamine-1-phosphate. This is Phosphoglucosamine mutase from Levilactobacillus brevis (strain ATCC 367 / BCRC 12310 / CIP 105137 / JCM 1170 / LMG 11437 / NCIMB 947 / NCTC 947) (Lactobacillus brevis).